Reading from the N-terminus, the 280-residue chain is Elongation factor Ts (280 aa).

The involved in Mg(2+) ion dislocation from EF-Tu stretch occupies residues 79–82 (TDFV).

This sequence belongs to the EF-Ts family.

It localises to the cytoplasm. In terms of biological role, associates with the EF-Tu.GDP complex and induces the exchange of GDP to GTP. It remains bound to the aminoacyl-tRNA.EF-Tu.GTP complex up to the GTP hydrolysis stage on the ribosome. The polypeptide is Elongation factor Ts (Vibrio cholerae serotype O1 (strain ATCC 39541 / Classical Ogawa 395 / O395)).